The primary structure comprises 720 residues: Engulfment and cell motility protein 2 (720 aa).

Phosphotyrosine is present on Tyr-48. The 175-residue stretch at 310-484 (QAQRDIIFEL…QVVREQITRA (175 aa)) folds into the ELMO domain. Ser-503 carries the post-translational modification Phosphoserine. The region spanning 553-674 (SSFRKIGNRR…LLGKDMSSEL (122 aa)) is the PH domain. The SH3-binding signature appears at 700 to 707 (PEAPPPVP). A Phosphotyrosine modification is found at Tyr-717.

As to quaternary structure, interacts directly with the SH3-domain of DOCK1 via its SH3-binding site. Probably forms a heterotrimeric complex with DOCK1 and RAC1. Interacts with ARHGEF16, DOCK4 and EPHA2; mediates activation of RAC1 by EPHA2. Interacts with ADGRB3. Interacts with AUTS2; the interaction is direct.

The protein resides in the cytoplasm. It is found in the cytosol. Its subcellular location is the membrane. Involved in cytoskeletal rearrangements required for phagocytosis of apoptotic cells and cell motility. Acts in association with DOCK1 and CRK. Was initially proposed to be required in complex with DOCK1 to activate Rac Rho small GTPases. May enhance the guanine nucleotide exchange factor (GEF) activity of DOCK1. The polypeptide is Engulfment and cell motility protein 2 (ELMO2) (Bos taurus (Bovine)).